Consider the following 163-residue polypeptide: Probable protein tyrosine phosphatase type IVA B (163 aa).

Residues 10 to 161 form the Tyrosine-protein phosphatase domain; that stretch reads TIIESSTHKF…YKASKKAGCK (152 aa). Cys-49 and Cys-104 are joined by a disulfide. Residue Asp-70 is the Proton donor of the active site. Cys-104 serves as the catalytic Phosphocysteine intermediate. 105 to 110 serves as a coordination point for phosphate; it reads IAGLGR. A substrate-binding site is contributed by Arg-110. A Cysteine methyl ester modification is found at Cys-160. Residue Cys-160 is the site of S-farnesyl cysteine attachment. A propeptide spans 161–163 (removed in mature form); it reads KIM.

Belongs to the protein-tyrosine phosphatase family.

It is found in the membrane. The catalysed reaction is O-phospho-L-tyrosyl-[protein] + H2O = L-tyrosyl-[protein] + phosphate. The chain is Probable protein tyrosine phosphatase type IVA B from Dictyostelium discoideum (Social amoeba).